The following is a 124-amino-acid chain: Urease subunit beta (124 aa).

The protein belongs to the urease beta subunit family. In terms of assembly, heterotrimer of UreA (gamma), UreB (beta) and UreC (alpha) subunits. Three heterotrimers associate to form the active enzyme.

Its subcellular location is the cytoplasm. The enzyme catalyses urea + 2 H2O + H(+) = hydrogencarbonate + 2 NH4(+). The protein operates within nitrogen metabolism; urea degradation; CO(2) and NH(3) from urea (urease route): step 1/1. In Bacillus velezensis (strain DSM 23117 / BGSC 10A6 / LMG 26770 / FZB42) (Bacillus amyloliquefaciens subsp. plantarum), this protein is Urease subunit beta.